The sequence spans 501 residues: Probable cytosol aminopeptidase (501 aa).

Residues lysine 268 and aspartate 273 each coordinate Mn(2+). Residue lysine 280 is part of the active site. Positions 291, 350, and 352 each coordinate Mn(2+). The active site involves arginine 354.

Belongs to the peptidase M17 family. Mn(2+) is required as a cofactor.

It is found in the cytoplasm. The catalysed reaction is Release of an N-terminal amino acid, Xaa-|-Yaa-, in which Xaa is preferably Leu, but may be other amino acids including Pro although not Arg or Lys, and Yaa may be Pro. Amino acid amides and methyl esters are also readily hydrolyzed, but rates on arylamides are exceedingly low.. It carries out the reaction Release of an N-terminal amino acid, preferentially leucine, but not glutamic or aspartic acids.. Functionally, presumably involved in the processing and regular turnover of intracellular proteins. Catalyzes the removal of unsubstituted N-terminal amino acids from various peptides. This Pseudoalteromonas atlantica (strain T6c / ATCC BAA-1087) protein is Probable cytosol aminopeptidase.